The sequence spans 351 residues: MSGLPPLTIRLCGPRGFCAGVDRAIQIVLLALKKYSAPVYVRHEIVHNRYVVEGLQQRGAVFVEELDEIPEEHRNQPVVFSAHGVPKSVSEEARRYNLFYLDATCPLVSKVHKQAIRHQRHGRHVILIGHAGHPEVIGTMGQLEDGAVTLIETIEDALHYQPGDPDKLGFVTQTTLSVEDTAGILDVLQQRFPTLAAPAAESICYATTNRQDAVKAAAKGSDLFLIVGAPNSSNSRRLVEVAEKSGARQAILVQRADEINFENLKALSVVSLSAGASAPEIIIDEIISAFRARYNVTIELAETVVETERFLVSRELRDVILTSQDMAFVNGQANNAKNENQNTDMFTTKAE.

A [4Fe-4S] cluster-binding site is contributed by cysteine 18. Residues histidine 47 and histidine 83 each contribute to the (2E)-4-hydroxy-3-methylbut-2-enyl diphosphate site. Dimethylallyl diphosphate is bound by residues histidine 47 and histidine 83. Residues histidine 47 and histidine 83 each contribute to the isopentenyl diphosphate site. Position 105 (cysteine 105) interacts with [4Fe-4S] cluster. Histidine 133 lines the (2E)-4-hydroxy-3-methylbut-2-enyl diphosphate pocket. Histidine 133 is a binding site for dimethylallyl diphosphate. Histidine 133 is a binding site for isopentenyl diphosphate. The active-site Proton donor is glutamate 135. Threonine 174 is a binding site for (2E)-4-hydroxy-3-methylbut-2-enyl diphosphate. Cysteine 204 is a binding site for [4Fe-4S] cluster. The (2E)-4-hydroxy-3-methylbut-2-enyl diphosphate site is built by serine 232, serine 233, asparagine 234, and serine 277. Residues serine 232, serine 233, asparagine 234, and serine 277 each coordinate dimethylallyl diphosphate. Isopentenyl diphosphate is bound by residues serine 232, serine 233, asparagine 234, and serine 277.

The protein belongs to the IspH family. [4Fe-4S] cluster is required as a cofactor.

The enzyme catalyses isopentenyl diphosphate + 2 oxidized [2Fe-2S]-[ferredoxin] + H2O = (2E)-4-hydroxy-3-methylbut-2-enyl diphosphate + 2 reduced [2Fe-2S]-[ferredoxin] + 2 H(+). It catalyses the reaction dimethylallyl diphosphate + 2 oxidized [2Fe-2S]-[ferredoxin] + H2O = (2E)-4-hydroxy-3-methylbut-2-enyl diphosphate + 2 reduced [2Fe-2S]-[ferredoxin] + 2 H(+). It functions in the pathway isoprenoid biosynthesis; dimethylallyl diphosphate biosynthesis; dimethylallyl diphosphate from (2E)-4-hydroxy-3-methylbutenyl diphosphate: step 1/1. It participates in isoprenoid biosynthesis; isopentenyl diphosphate biosynthesis via DXP pathway; isopentenyl diphosphate from 1-deoxy-D-xylulose 5-phosphate: step 6/6. Functionally, catalyzes the conversion of 1-hydroxy-2-methyl-2-(E)-butenyl 4-diphosphate (HMBPP) into a mixture of isopentenyl diphosphate (IPP) and dimethylallyl diphosphate (DMAPP). Acts in the terminal step of the DOXP/MEP pathway for isoprenoid precursor biosynthesis. The polypeptide is 4-hydroxy-3-methylbut-2-enyl diphosphate reductase (Bartonella tribocorum (strain CIP 105476 / IBS 506)).